The chain runs to 209 residues: 3-demethoxyubiquinol 3-hydroxylase (209 aa).

Positions 23–36 (PHATRAAPAPAQAP) are enriched in low complexity. Residues 23–42 (PHATRAAPAPAQAPGEMTDS) are disordered. The Fe cation site is built by Glu58, Glu88, His91, Glu140, Glu172, and His175.

Belongs to the COQ7 family. It depends on Fe cation as a cofactor.

It is found in the cell membrane. The enzyme catalyses a 5-methoxy-2-methyl-3-(all-trans-polyprenyl)benzene-1,4-diol + AH2 + O2 = a 3-demethylubiquinol + A + H2O. Its pathway is cofactor biosynthesis; ubiquinone biosynthesis. Functionally, catalyzes the hydroxylation of 2-nonaprenyl-3-methyl-6-methoxy-1,4-benzoquinol during ubiquinone biosynthesis. The polypeptide is 3-demethoxyubiquinol 3-hydroxylase (Variovorax paradoxus (strain S110)).